The chain runs to 181 residues: CASP-like protein 2C1 (181 aa).

Topologically, residues 1–7 (MALEIPK) are cytoplasmic. Residues 8–28 (IEAILRGIAILLLVSTACLVG) form a helical membrane-spanning segment. Residues 29–49 (LDSQTKFVIVYEKEVTYKDLH) are Extracellular-facing. A helical membrane pass occupies residues 50 to 70 (ALVVLVYVDAVAAAYNLLQLC). At 71–98 (RCSVSALSKGNFKGSYRYLSWACFVLDQ) the chain is on the cytoplasmic side. Residues 99-119 (LAAYTTFAAHSAALQHSVLGI) form a helical membrane-spanning segment. Residues 120–140 (TGAKVFQWMKWCNRFTRFCFQ) are Extracellular-facing. The chain crosses the membrane as a helical span at residues 141-161 (IGGALTCGYIASVLMVMISFI). The Cytoplasmic segment spans residues 162–181 (SAFNLFRLYSPKHFLRLKGT).

This sequence belongs to the Casparian strip membrane proteins (CASP) family. As to quaternary structure, homodimer and heterodimers.

It localises to the cell membrane. The sequence is that of CASP-like protein 2C1 from Populus trichocarpa (Western balsam poplar).